A 90-amino-acid chain; its full sequence is Small ribosomal subunit protein uS15 (90 aa).

It belongs to the universal ribosomal protein uS15 family. In terms of assembly, part of the 30S ribosomal subunit. Forms a bridge to the 50S subunit in the 70S ribosome, contacting the 23S rRNA.

Functionally, one of the primary rRNA binding proteins, it binds directly to 16S rRNA where it helps nucleate assembly of the platform of the 30S subunit by binding and bridging several RNA helices of the 16S rRNA. In terms of biological role, forms an intersubunit bridge (bridge B4) with the 23S rRNA of the 50S subunit in the ribosome. In Campylobacter lari (strain RM2100 / D67 / ATCC BAA-1060), this protein is Small ribosomal subunit protein uS15.